Here is a 212-residue protein sequence, read N- to C-terminus: Nuclear transcription factor Y subunit C-7 (212 aa).

Polar residues predominate over residues 1–10 (MEENNGNNNH). 2 disordered regions span residues 1–23 (MEEN…LPPP) and 190–212 (EWPA…SGGN).

It belongs to the NFYC/HAP5 subunit family. As to quaternary structure, heterotrimeric transcription factor composed of three components, NF-YA, NF-YB and NF-YC. NF-YB and NF-YC must interact and dimerize for NF-YA association and DNA binding. In terms of tissue distribution, expressed in flowers.

The protein resides in the nucleus. In terms of biological role, stimulates the transcription of various genes by recognizing and binding to a CCAAT motif in promoters. This Arabidopsis thaliana (Mouse-ear cress) protein is Nuclear transcription factor Y subunit C-7 (NFYC7).